The following is a 300-amino-acid chain: Bifunctional protein FolD (300 aa).

Residues 172–174 (GRS), serine 206, and isoleucine 247 each bind NADP(+).

Belongs to the tetrahydrofolate dehydrogenase/cyclohydrolase family. As to quaternary structure, homodimer.

The catalysed reaction is (6R)-5,10-methylene-5,6,7,8-tetrahydrofolate + NADP(+) = (6R)-5,10-methenyltetrahydrofolate + NADPH. The enzyme catalyses (6R)-5,10-methenyltetrahydrofolate + H2O = (6R)-10-formyltetrahydrofolate + H(+). The protein operates within one-carbon metabolism; tetrahydrofolate interconversion. Functionally, catalyzes the oxidation of 5,10-methylenetetrahydrofolate to 5,10-methenyltetrahydrofolate and then the hydrolysis of 5,10-methenyltetrahydrofolate to 10-formyltetrahydrofolate. This chain is Bifunctional protein FolD, found in Rhodopirellula baltica (strain DSM 10527 / NCIMB 13988 / SH1).